A 155-amino-acid polypeptide reads, in one-letter code: NADPH-dependent 7-cyano-7-deazaguanine reductase (155 aa).

Positions 1-20 are enriched in polar residues; it reads MMPNTDVSSLSMLGQQTETA. Positions 1 to 26 are disordered; the sequence is MMPNTDVSSLSMLGQQTETAKSPEEA. Catalysis depends on Cys53, which acts as the Thioimide intermediate. Asp60 serves as the catalytic Proton donor. Substrate contacts are provided by residues 75–77 and 94–95; these read VES and HE.

Belongs to the GTP cyclohydrolase I family. QueF type 1 subfamily.

The protein resides in the cytoplasm. It carries out the reaction 7-aminomethyl-7-carbaguanine + 2 NADP(+) = 7-cyano-7-deazaguanine + 2 NADPH + 3 H(+). It functions in the pathway tRNA modification; tRNA-queuosine biosynthesis. Catalyzes the NADPH-dependent reduction of 7-cyano-7-deazaguanine (preQ0) to 7-aminomethyl-7-deazaguanine (preQ1). This Rhizobium etli (strain CIAT 652) protein is NADPH-dependent 7-cyano-7-deazaguanine reductase.